Here is a 362-residue protein sequence, read N- to C-terminus: Phosphoserine aminotransferase (362 aa).

Positions 9 and 42 each coordinate L-glutamate. Residues 76–77 (GR), W102, T153, D174, and Q197 each bind pyridoxal 5'-phosphate. K198 bears the N6-(pyridoxal phosphate)lysine mark. Pyridoxal 5'-phosphate is bound at residue 239–240 (NT).

The protein belongs to the class-V pyridoxal-phosphate-dependent aminotransferase family. SerC subfamily. As to quaternary structure, homodimer. Pyridoxal 5'-phosphate is required as a cofactor.

It is found in the cytoplasm. The enzyme catalyses O-phospho-L-serine + 2-oxoglutarate = 3-phosphooxypyruvate + L-glutamate. It catalyses the reaction 4-(phosphooxy)-L-threonine + 2-oxoglutarate = (R)-3-hydroxy-2-oxo-4-phosphooxybutanoate + L-glutamate. The protein operates within amino-acid biosynthesis; L-serine biosynthesis; L-serine from 3-phospho-D-glycerate: step 2/3. It participates in cofactor biosynthesis; pyridoxine 5'-phosphate biosynthesis; pyridoxine 5'-phosphate from D-erythrose 4-phosphate: step 3/5. Functionally, catalyzes the reversible conversion of 3-phosphohydroxypyruvate to phosphoserine and of 3-hydroxy-2-oxo-4-phosphonooxybutanoate to phosphohydroxythreonine. This is Phosphoserine aminotransferase from Escherichia coli (strain ATCC 8739 / DSM 1576 / NBRC 3972 / NCIMB 8545 / WDCM 00012 / Crooks).